A 257-amino-acid polypeptide reads, in one-letter code: 1-(5-phosphoribosyl)-5-[(5-phosphoribosylamino)methylideneamino] imidazole-4-carboxamide isomerase (257 aa).

The Proton acceptor role is filled by Asp8. Residue Asp129 is the Proton donor of the active site.

This sequence belongs to the HisA/HisF family.

It is found in the cytoplasm. The catalysed reaction is 1-(5-phospho-beta-D-ribosyl)-5-[(5-phospho-beta-D-ribosylamino)methylideneamino]imidazole-4-carboxamide = 5-[(5-phospho-1-deoxy-D-ribulos-1-ylimino)methylamino]-1-(5-phospho-beta-D-ribosyl)imidazole-4-carboxamide. The protein operates within amino-acid biosynthesis; L-histidine biosynthesis; L-histidine from 5-phospho-alpha-D-ribose 1-diphosphate: step 4/9. The protein is 1-(5-phosphoribosyl)-5-[(5-phosphoribosylamino)methylideneamino] imidazole-4-carboxamide isomerase of Trichormus variabilis (strain ATCC 29413 / PCC 7937) (Anabaena variabilis).